The chain runs to 263 residues: Tryptophan synthase alpha chain (263 aa).

Residues Glu-49 and Asp-60 each act as proton acceptor in the active site.

The protein belongs to the TrpA family. Tetramer of two alpha and two beta chains.

The catalysed reaction is (1S,2R)-1-C-(indol-3-yl)glycerol 3-phosphate + L-serine = D-glyceraldehyde 3-phosphate + L-tryptophan + H2O. The protein operates within amino-acid biosynthesis; L-tryptophan biosynthesis; L-tryptophan from chorismate: step 5/5. In terms of biological role, the alpha subunit is responsible for the aldol cleavage of indoleglycerol phosphate to indole and glyceraldehyde 3-phosphate. This chain is Tryptophan synthase alpha chain, found in Cereibacter sphaeroides (strain ATCC 17029 / ATH 2.4.9) (Rhodobacter sphaeroides).